The sequence spans 397 residues: Lysophospholipid transporter LplT (397 aa).

Over 1–17 (MSESVHTNTSLWSKGMK) the chain is Periplasmic. The helical transmembrane segment at 18-38 (AVIVAQFLSAFGDNALLFATL) threads the bilayer. Residues 39-52 (ALLKAQFYPEWSQP) are Cytoplasmic-facing. The chain crosses the membrane as a helical span at residues 53–73 (VLQMVFVGAYILFAPFVGQVA). Residues 74 to 90 (DSFAKGRVMMFANGLKL) lie on the Periplasmic side of the membrane. The helical transmembrane segment at 91-111 (LGAASICFGFNPFVGYTLVGI) threads the bilayer. Topologically, residues 112–144 (GAAAYSPAKYGILGELTTGDKLVKANGLMEAST) are cytoplasmic. Residues 145–165 (IAAILLGSVAGGVLADLHVLV) form a helical membrane-spanning segment. A topological domain (periplasmic) is located at residue alanine 166. A helical membrane pass occupies residues 167-187 (LAACALAYAGAVAANIYIPKL). Residues 188–226 (AAARPGQSWNVLKMTCSFKSACTSLWQNGETRFSLVGTS) are Cytoplasmic-facing. A helical transmembrane segment spans residues 227-247 (LFWGAGVTLRFLLVLWVPVAL). Topologically, residues 248-256 (GITDNATPT) are periplasmic. A helical transmembrane segment spans residues 257 to 277 (YLNAMVAIGIVLGAGAAAKLV). Topologically, residues 278–280 (TLE) are cytoplasmic. Residues 281–301 (TVSRCMPAGILIGVVVLFFSL) form a helical membrane-spanning segment. Over 302 to 304 (QHE) the chain is Periplasmic. The helical transmembrane segment at 305-325 (LLPAYALLMLIGVLGGFFVVP) threads the bilayer. Over 326 to 343 (LNALLQERGKKSVGAGNA) the chain is Cytoplasmic. A helical membrane pass occupies residues 344–364 (IAVQNLGENSAMLLMLGIYSL). Residues 365 to 366 (AV) are Periplasmic-facing. A helical transmembrane segment spans residues 367-387 (LVGIPVVPIGIGFGTLFALAI). The Cytoplasmic segment spans residues 388 to 397 (TALWIWQRRH).

Belongs to the major facilitator superfamily. LplT (TC 2.A.1.42) family.

It is found in the cell inner membrane. Catalyzes the facilitated diffusion of 2-acyl-glycero-3-phosphoethanolamine (2-acyl-GPE) into the cell. The chain is Lysophospholipid transporter LplT from Escherichia fergusonii (strain ATCC 35469 / DSM 13698 / CCUG 18766 / IAM 14443 / JCM 21226 / LMG 7866 / NBRC 102419 / NCTC 12128 / CDC 0568-73).